Consider the following 214-residue polypeptide: Thymidylate kinase (214 aa).

9 to 16 is a binding site for ATP; that stretch reads GVDGSGKS.

Belongs to the thymidylate kinase family.

It catalyses the reaction dTMP + ATP = dTDP + ADP. In terms of biological role, phosphorylation of dTMP to form dTDP in both de novo and salvage pathways of dTTP synthesis. This is Thymidylate kinase from Symbiobacterium thermophilum (strain DSM 24528 / JCM 14929 / IAM 14863 / T).